Here is a 486-residue protein sequence, read N- to C-terminus: ATP synthase subunit beta (486 aa).

164 to 171 (GGAGVGKT) is a binding site for ATP.

It belongs to the ATPase alpha/beta chains family. As to quaternary structure, F-type ATPases have 2 components, CF(1) - the catalytic core - and CF(0) - the membrane proton channel. CF(1) has five subunits: alpha(3), beta(3), gamma(1), delta(1), epsilon(1). CF(0) has four main subunits: a(1), b(1), b'(1) and c(9-12).

It is found in the cellular thylakoid membrane. It carries out the reaction ATP + H2O + 4 H(+)(in) = ADP + phosphate + 5 H(+)(out). Functionally, produces ATP from ADP in the presence of a proton gradient across the membrane. The catalytic sites are hosted primarily by the beta subunits. The sequence is that of ATP synthase subunit beta from Prochlorococcus marinus (strain MIT 9312).